The sequence spans 716 residues: Fatty acid oxidation complex subunit alpha (716 aa).

The segment at 1–189 is enoyl-CoA hydratase/isomerase; it reads MIYQSPTIQV…KVGAVDAVVA (189 aa). D296 contributes to the substrate binding site. A 3-hydroxyacyl-CoA dehydrogenase region spans residues 311–716; that stretch reads KEVNNAAVLG…AANNGSYYQA (406 aa). Residues M324, D343, 400-402, K407, and S429 each bind NAD(+); that span reads VVE. H450 (for 3-hydroxyacyl-CoA dehydrogenase activity) is an active-site residue. NAD(+) is bound at residue N453. Substrate-binding residues include N500 and Y660.

The protein in the N-terminal section; belongs to the enoyl-CoA hydratase/isomerase family. This sequence in the C-terminal section; belongs to the 3-hydroxyacyl-CoA dehydrogenase family. As to quaternary structure, heterotetramer of two alpha chains (FadB) and two beta chains (FadA).

The catalysed reaction is a (3S)-3-hydroxyacyl-CoA + NAD(+) = a 3-oxoacyl-CoA + NADH + H(+). It carries out the reaction a (3S)-3-hydroxyacyl-CoA = a (2E)-enoyl-CoA + H2O. The enzyme catalyses a 4-saturated-(3S)-3-hydroxyacyl-CoA = a (3E)-enoyl-CoA + H2O. It catalyses the reaction (3S)-3-hydroxybutanoyl-CoA = (3R)-3-hydroxybutanoyl-CoA. The catalysed reaction is a (3Z)-enoyl-CoA = a 4-saturated (2E)-enoyl-CoA. It carries out the reaction a (3E)-enoyl-CoA = a 4-saturated (2E)-enoyl-CoA. The protein operates within lipid metabolism; fatty acid beta-oxidation. Involved in the aerobic and anaerobic degradation of long-chain fatty acids via beta-oxidation cycle. Catalyzes the formation of 3-oxoacyl-CoA from enoyl-CoA via L-3-hydroxyacyl-CoA. It can also use D-3-hydroxyacyl-CoA and cis-3-enoyl-CoA as substrate. The chain is Fatty acid oxidation complex subunit alpha from Shewanella baltica (strain OS155 / ATCC BAA-1091).